The primary structure comprises 287 residues: 4-diphosphocytidyl-2-C-methyl-D-erythritol kinase (287 aa).

Lys-10 is an active-site residue. 92 to 102 (PLAAGLAGGSA) is a binding site for ATP. The active site involves Asp-134.

This sequence belongs to the GHMP kinase family. IspE subfamily.

The catalysed reaction is 4-CDP-2-C-methyl-D-erythritol + ATP = 4-CDP-2-C-methyl-D-erythritol 2-phosphate + ADP + H(+). It functions in the pathway isoprenoid biosynthesis; isopentenyl diphosphate biosynthesis via DXP pathway; isopentenyl diphosphate from 1-deoxy-D-xylulose 5-phosphate: step 3/6. In terms of biological role, catalyzes the phosphorylation of the position 2 hydroxy group of 4-diphosphocytidyl-2C-methyl-D-erythritol. This chain is 4-diphosphocytidyl-2-C-methyl-D-erythritol kinase, found in Caldanaerobacter subterraneus subsp. tengcongensis (strain DSM 15242 / JCM 11007 / NBRC 100824 / MB4) (Thermoanaerobacter tengcongensis).